We begin with the raw amino-acid sequence, 242 residues long: MAAASGHGLELANGGDATQDKLHPRNLIPELCRLFYGLGWVTGTGGGISLKHGNEIYIAPSGVQKERIQPEDMFVCDMNEQDISGPPAHKKLKKSQCTPLFMNAYTMRGAGAVIHTHSKAAVMATLLYPGNEFTITHQEMIKGIQKCSSGGYYRYDDTLVVPIIENTPEEKDLKERMAKAMEEYPDSCAVLVRRHGVYVWGETWEKAKTMCECYDYLFDIAVQMKQHGLDPSKHPAGENGIL.

Positions 1–22 (MAAASGHGLELANGGDATQDKL) are disordered. Cys97 lines the substrate pocket. Zn(2+) is bound by residues His115 and His117. Glu139 (proton donor/acceptor) is an active-site residue. His195 lines the Zn(2+) pocket.

Belongs to the aldolase class II family. MtnB subfamily. The cofactor is Zn(2+).

The protein localises to the cytoplasm. The catalysed reaction is 5-(methylsulfanyl)-D-ribulose 1-phosphate = 5-methylsulfanyl-2,3-dioxopentyl phosphate + H2O. The protein operates within amino-acid biosynthesis; L-methionine biosynthesis via salvage pathway; L-methionine from S-methyl-5-thio-alpha-D-ribose 1-phosphate: step 2/6. Functionally, catalyzes the dehydration of methylthioribulose-1-phosphate (MTRu-1-P) into 2,3-diketo-5-methylthiopentyl-1-phosphate (DK-MTP-1-P). Functions in the methionine salvage pathway. May play a role in apoptosis. The polypeptide is Methylthioribulose-1-phosphate dehydratase (Gallus gallus (Chicken)).